Reading from the N-terminus, the 623-residue chain is Glutathione import ATP-binding protein GsiA (623 aa).

2 consecutive ABC transporter domains span residues 15–269 (VSGL…QTLL) and 325–564 (LRSG…RKLM). ATP is bound by residues 49–56 (GESGSGKS) and 357–364 (GESGSGKS).

The protein belongs to the ABC transporter superfamily. Glutathione importer (TC 3.A.1.5.11) family. As to quaternary structure, the complex is composed of two ATP-binding proteins (GsiA), two transmembrane proteins (GsiC and GsiD) and a solute-binding protein (GsiB).

The protein localises to the cell inner membrane. The enzyme catalyses glutathione(out) + ATP + H2O = glutathione(in) + ADP + phosphate + H(+). Part of the ABC transporter complex GsiABCD involved in glutathione import. Responsible for energy coupling to the transport system. This chain is Glutathione import ATP-binding protein GsiA, found in Salmonella typhimurium (strain LT2 / SGSC1412 / ATCC 700720).